The primary structure comprises 310 residues: Putative S-adenosyl-L-methionine-dependent methyltransferase Franean1_4929 (310 aa).

A disordered region spans residues 1 to 28 (MSRPSAPRGRTELRSIHERGHERGSAGV). Residues 9–24 (GRTELRSIHERGHERG) show a composition bias toward basic and acidic residues. Residues Asp136 and 165–166 (DL) each bind S-adenosyl-L-methionine.

This sequence belongs to the UPF0677 family.

Functionally, exhibits S-adenosyl-L-methionine-dependent methyltransferase activity. The polypeptide is Putative S-adenosyl-L-methionine-dependent methyltransferase Franean1_4929 (Parafrankia sp. (strain EAN1pec)).